The primary structure comprises 386 residues: Methionine import ATP-binding protein MetN 2 (386 aa).

The 241-residue stretch at Val32–Leu272 folds into the ABC transporter domain. Gly69 to Ser76 serves as a coordination point for ATP.

The protein belongs to the ABC transporter superfamily. Methionine importer (TC 3.A.1.24) family. The complex is composed of two ATP-binding proteins (MetN), two transmembrane proteins (MetI) and a solute-binding protein (MetQ).

The protein localises to the cell inner membrane. It carries out the reaction L-methionine(out) + ATP + H2O = L-methionine(in) + ADP + phosphate + H(+). It catalyses the reaction D-methionine(out) + ATP + H2O = D-methionine(in) + ADP + phosphate + H(+). Functionally, part of the ABC transporter complex MetNIQ involved in methionine import. Responsible for energy coupling to the transport system. The polypeptide is Methionine import ATP-binding protein MetN 2 (Paraburkholderia xenovorans (strain LB400)).